The following is a 171-amino-acid chain: MDRAQKAELVADLKSTFEGTSVVIVTRNLGLTVAQSTALRTKMREAGASYKVSKNKLARIALEGTTYQAINDLLVGPTALATSADPVAPAKVIVDFAKTNDKLEIVGGAMGETVLDVAGVKALAELPSLDELRAKIVGLIQAPATKVVQIVQAPAGQLARVFGAYAAKEDA.

Belongs to the universal ribosomal protein uL10 family. As to quaternary structure, part of the ribosomal stalk of the 50S ribosomal subunit. The N-terminus interacts with L11 and the large rRNA to form the base of the stalk. The C-terminus forms an elongated spine to which L12 dimers bind in a sequential fashion forming a multimeric L10(L12)X complex.

Its function is as follows. Forms part of the ribosomal stalk, playing a central role in the interaction of the ribosome with GTP-bound translation factors. The chain is Large ribosomal subunit protein uL10 from Rhizorhabdus wittichii (strain DSM 6014 / CCUG 31198 / JCM 15750 / NBRC 105917 / EY 4224 / RW1) (Sphingomonas wittichii).